The sequence spans 425 residues: Pleckstrin homology domain-containing family A member 2 (425 aa).

In terms of domain architecture, PH 1 spans 7–113 (QNRICGFLDI…WVEALNQASK (107 aa)). K141 is covalently cross-linked (Glycyl lysine isopeptide (Lys-Gly) (interchain with G-Cter in SUMO2)). At S184 the chain carries Phosphoserine. The 101-residue stretch at 198–298 (PLIKSGYCVK…WIKEIGAAVQ (101 aa)) folds into the PH 2 domain. 2 positions are modified to phosphoserine: S314 and S349. The disordered stretch occupies residues 374–410 (AEDSLFTPRLGESSTSAVLPSSRIRHRSEPQHPKEKP). Basic and acidic residues predominate over residues 400 to 410 (RSEPQHPKEKP).

In terms of assembly, binds MPDZ and PTPN13.

Its subcellular location is the cytoplasm. It localises to the cell membrane. The protein resides in the nucleus. In terms of biological role, binds specifically to phosphatidylinositol 3,4-diphosphate (PtdIns3,4P2), but not to other phosphoinositides. May recruit other proteins to the plasma membrane. This chain is Pleckstrin homology domain-containing family A member 2 (PLEKHA2), found in Bos taurus (Bovine).